Consider the following 99-residue polypeptide: Integration host factor subunit alpha (99 aa).

Positions 51–71 (NFDLRDKNQRPGRNPKTGEDI) are disordered.

The protein belongs to the bacterial histone-like protein family. As to quaternary structure, heterodimer of an alpha and a beta chain.

In terms of biological role, this protein is one of the two subunits of integration host factor, a specific DNA-binding protein that functions in genetic recombination as well as in transcriptional and translational control. This chain is Integration host factor subunit alpha (ihfA), found in Dickeya dadantii (strain 3937) (Erwinia chrysanthemi (strain 3937)).